The sequence spans 104 residues: Protein RnfH (104 aa).

A disordered region spans residues 80–104; sequence PLTADPKLNRKRRAKEKASAGKASN.

Belongs to the UPF0125 (RnfH) family.

In Alcanivorax borkumensis (strain ATCC 700651 / DSM 11573 / NCIMB 13689 / SK2), this protein is Protein RnfH.